The primary structure comprises 494 residues: V-type proton ATPase subunit B (494 aa).

The protein belongs to the ATPase alpha/beta chains family. V-ATPase is a heteromultimeric enzyme composed of a peripheral catalytic V1 complex (main components: subunits A, B, C, D, E, and F) attached to an integral membrane V0 proton pore complex (main component: the proteolipid protein).

Its function is as follows. Non-catalytic subunit of the peripheral V1 complex of vacuolar ATPase. V-ATPase is responsible for acidifying a variety of intracellular compartments in eukaryotic cells. The polypeptide is V-type proton ATPase subunit B (VAPB) (Plasmodium falciparum).